Reading from the N-terminus, the 25-residue chain is Androctonin (25 aa).

2 disulfide bridges follow: cysteine 4–cysteine 20 and cysteine 10–cysteine 16.

The protein resides in the secreted. Functionally, active against both bacteria (Gram-positive and Gram-negative) and filamentous fungi. Acts on the membrane of the bacterial cells. It destabilize a membrane by modifying its properties. In Androctonus australis (Sahara scorpion), this protein is Androctonin.